The following is a 63-amino-acid chain: Insect toxin TbIT-1 (63 aa).

The LCN-type CS-alpha/beta domain occupies 2-63 (KEGYPVDSRG…VYDNASNKCB (62 aa)). 4 disulfide bridges follow: C12/C62, C16/C38, C24/C43, and C28/C45.

Belongs to the long (4 C-C) scorpion toxin superfamily. Sodium channel inhibitor family. Beta subfamily. As to expression, expressed by the venom gland.

Its subcellular location is the secreted. Functionally, beta toxins bind voltage-independently at site-4 of sodium channels (Nav) and shift the voltage of activation toward more negative potentials thereby affecting sodium channel activation and promoting spontaneous and repetitive firing. This toxin is only active against insects. In Tityus bahiensis (Brazilian scorpion), this protein is Insect toxin TbIT-1.